Reading from the N-terminus, the 143-residue chain is Large ribosomal subunit protein uL11 (143 aa).

This sequence belongs to the universal ribosomal protein uL11 family. As to quaternary structure, part of the ribosomal stalk of the 50S ribosomal subunit. Interacts with L10 and the large rRNA to form the base of the stalk. L10 forms an elongated spine to which L12 dimers bind in a sequential fashion forming a multimeric L10(L12)X complex. Post-translationally, one or more lysine residues are methylated.

Functionally, forms part of the ribosomal stalk which helps the ribosome interact with GTP-bound translation factors. The protein is Large ribosomal subunit protein uL11 of Chromohalobacter salexigens (strain ATCC BAA-138 / DSM 3043 / CIP 106854 / NCIMB 13768 / 1H11).